Here is a 971-residue protein sequence, read N- to C-terminus: Xylanolytic transcriptional activator xlnR (971 aa).

Disordered regions lie at residues 1-25 (MSTT…PVGM) and 55-123 (GASA…PVRR). Low complexity predominate over residues 9 to 18 (FTSSFSPFSS). Positions 67-96 (LRSSISKPQGQQLYSDESSAQHTQNATTGF) are enriched in polar residues. Positions 129-155 (CDQCNQLRTKCDGQNPCAHCIEFGLTC) form a DNA-binding region, zn(2)-C6 fungal-type. Composition is skewed to polar residues over residues 182–199 (NGTA…SVSS), 227–241 (NLAT…QHSD), and 249–260 (QGSQQTPHSQPS). Disordered stretches follow at residues 182-263 (NGTA…SLGG), 295-316 (LHPS…GMNS), and 580-610 (RELP…NLPP).

This sequence belongs to the xlnR/xlr1 family.

Its subcellular location is the nucleus. Transcriptional activator of the xylanolytic system. Involved in the regulation of extracellular cellulolytic and xylanolytic genes and in the regulation of the intracellular activities of D-xylose catabolic genes in the pentose catabolic pathway (PCP) in response to the presence of D-xylose. This chain is Xylanolytic transcriptional activator xlnR (xlnR), found in Aspergillus flavus (strain ATCC 200026 / FGSC A1120 / IAM 13836 / NRRL 3357 / JCM 12722 / SRRC 167).